A 406-amino-acid polypeptide reads, in one-letter code: Tyrosine--tRNA ligase (406 aa).

Tyr35 lines the L-tyrosine pocket. The 'HIGH' region signature appears at 40 to 49 (PTADSLHVGH). 2 residues coordinate L-tyrosine: Tyr168 and Gln172. The short motif at 228-232 (KMGKT) is the 'KMSKS' region element. Lys231 is a binding site for ATP. The S4 RNA-binding domain occupies 340–404 (STVLDIIAKT…RGKKNYNKIE (65 aa)).

It belongs to the class-I aminoacyl-tRNA synthetase family. TyrS type 1 subfamily. In terms of assembly, homodimer.

It localises to the cytoplasm. The catalysed reaction is tRNA(Tyr) + L-tyrosine + ATP = L-tyrosyl-tRNA(Tyr) + AMP + diphosphate + H(+). Its function is as follows. Catalyzes the attachment of tyrosine to tRNA(Tyr) in a two-step reaction: tyrosine is first activated by ATP to form Tyr-AMP and then transferred to the acceptor end of tRNA(Tyr). This is Tyrosine--tRNA ligase from Clostridium botulinum (strain Alaska E43 / Type E3).